A 425-amino-acid chain; its full sequence is Spermatogenesis- and oogenesis-specific basic helix-loop-helix-containing protein 2 (425 aa).

One can recognise a bHLH domain in the interval 201-252 (KISLLHSSKEKLRRERIKYCCEQLRTLLPYVKGRKNDAASVLEATVDYVKYI).

In terms of assembly, forms both hetero- and homodimers with SOHLH1.

The protein localises to the nucleus. The protein resides in the cytoplasm. Transcription regulator of both male and female germline differentiation. Suppresses genes involved in spermatogonial stem cells maintenance, and induces genes important for spermatogonial differentiation. Coordinates oocyte differentiation without affecting meiosis I. The polypeptide is Spermatogenesis- and oogenesis-specific basic helix-loop-helix-containing protein 2 (SOHLH2) (Homo sapiens (Human)).